Consider the following 385-residue polypeptide: Cytochrome b (385 aa).

The next 4 membrane-spanning stretches (helical) occupy residues 32–52 (FGSLLALCLVIQLATGITLAM), 76–98 (WFIRYAHANTASFFFICIYAHMG), 113–133 (PWSIGVIIFLLLIITAFMGYV), and 179–199 (FFALHYLMPFVLAVFALLHLI). 2 residues coordinate heme b: His-82 and His-96. Heme b contacts are provided by His-183 and His-197. His-202 is an a ubiquinone binding site. A run of 4 helical transmembrane segments spans residues 225–245 (YSFKDLITVFAFLLMFTLFVF), 289–309 (LGGVIAMVAAILILLILPIVD), 321–341 (ISKLLFGFFICNFLLLGVLGQ), and 348–368 (FIVLGQICTIFYFSYFLILLP).

It belongs to the cytochrome b family. In terms of assembly, fungal cytochrome b-c1 complex contains 10 subunits; 3 respiratory subunits, 2 core proteins and 5 low-molecular weight proteins. Cytochrome b-c1 complex is a homodimer. Requires heme b as cofactor.

The protein localises to the mitochondrion inner membrane. Component of the ubiquinol-cytochrome c reductase complex (complex III or cytochrome b-c1 complex) that is part of the mitochondrial respiratory chain. The b-c1 complex mediates electron transfer from ubiquinol to cytochrome c. Contributes to the generation of a proton gradient across the mitochondrial membrane that is then used for ATP synthesis. The chain is Cytochrome b (COB) from Yarrowia lipolytica (strain CLIB 122 / E 150) (Yeast).